The primary structure comprises 214 residues: tRNA (guanine-N(7)-)-methyltransferase (214 aa).

S-adenosyl-L-methionine-binding residues include Glu43, Glu68, Asp95, and Asp117. Asp117 is an active-site residue. Substrate contacts are provided by residues Lys121, Asp153, and 190-193 (TEYE).

It belongs to the class I-like SAM-binding methyltransferase superfamily. TrmB family.

It carries out the reaction guanosine(46) in tRNA + S-adenosyl-L-methionine = N(7)-methylguanosine(46) in tRNA + S-adenosyl-L-homocysteine. It participates in tRNA modification; N(7)-methylguanine-tRNA biosynthesis. Its function is as follows. Catalyzes the formation of N(7)-methylguanine at position 46 (m7G46) in tRNA. The protein is tRNA (guanine-N(7)-)-methyltransferase of Staphylococcus aureus (strain Mu3 / ATCC 700698).